A 669-amino-acid chain; its full sequence is MSYGYDDESKRKRRYIVITISSVLLISMVVAVTVGVSLNKHDGDSKGKAEVNASVKAVKDVCAPTDYRKTCEDTLIKNGKNTTDPMELVKTAFNVTMKQITDAAKKSQTIMELQKDSRTRMALDQCKELMDYALDELSNSFEELGKFEFHLLDEALINLRIWLSAAISHEETCLEGFQGTQGNAGETMKKALKTAIELTHNGLAIISEMSNFVGQMQIPGLNSRRLLAEGFPSWVDQRGRKLLQAAAAYSDVKPDIVVAQDGSGQYKTINEALQFVPKKRNTTFVVHIKAGLYKEYVQVNKTMSHLVFIGDGPDKTIISGNKNYKDGITTYRTATVAIVGNYFIAKNIGFENTAGAIKHQAVAVRVQSDESIFFNCRFDGYQDTLYTHSHRQFFRDCTISGTIDFLFGDAAAVFQNCTLLVRKPLPNQACPITAHGRKDPRESTGFVFQGCTIAGEPDYLAVKETSKAYLGRPWKEYSRTIIMNTFIPDFVQPQGWQPWLGDFGLKTLFYSEVQNTGPGSALANRVTWAGIKTLSEEDILKFTPAQYIQGDDWIPGKGVPYTTGLLAGNPAAATTTPSVSAAAPGFSTFTDTSGADSIAPTASPAASPESSISMAYTGTASPESSIKVSSSTETASPESSFTEASTASPESSIMVASTESSGSFFSMFT.

Residues 16–36 (IVITISSVLLISMVVAVTVGV) traverse the membrane as a helical segment. N-linked (GlcNAc...) asparagine glycans are attached at residues Asn52, Asn81, Asn94, Asn281, and Asn300. Positions 52–205 (NASVKAVKDV…IELTHNGLAI (154 aa)) are pectinesterase inhibitor 21. Residues 255–551 (DIVVAQDGSG…FTPAQYIQGD (297 aa)) form a pectinesterase 21 region. Positions 330 and 360 each coordinate substrate. The active-site Proton donor; for pectinesterase activity is Asp383. The cysteines at positions 397 and 417 are disulfide-linked. Asp404 serves as the catalytic Nucleophile; for pectinesterase activity. A glycan (N-linked (GlcNAc...) asparagine) is linked at Asn416. Substrate-binding residues include Arg472 and Trp474. The tract at residues 615–669 (AYTGTASPESSIKVSSSTETASPESSFTEASTASPESSIMVASTESSGSFFSMFT) is disordered. Positions 616 to 628 (YTGTASPESSIKV) are enriched in polar residues. Over residues 629 to 652 (SSSTETASPESSFTEASTASPESS) the composition is skewed to low complexity. Over residues 654–669 (MVASTESSGSFFSMFT) the composition is skewed to polar residues.

The protein in the N-terminal section; belongs to the PMEI family. This sequence in the C-terminal section; belongs to the pectinesterase family. As to expression, expressed in flower buds.

The protein localises to the membrane. The catalysed reaction is [(1-&gt;4)-alpha-D-galacturonosyl methyl ester](n) + n H2O = [(1-&gt;4)-alpha-D-galacturonosyl](n) + n methanol + n H(+). Its pathway is glycan metabolism; pectin degradation; 2-dehydro-3-deoxy-D-gluconate from pectin: step 1/5. Acts in the modification of cell walls via demethylesterification of cell wall pectin. The sequence is that of Probable pectinesterase/pectinesterase inhibitor 21 (PME21) from Arabidopsis thaliana (Mouse-ear cress).